Here is a 390-residue protein sequence, read N- to C-terminus: tRNA(Met) cytidine acetate ligase (390 aa).

ATP is bound by residues 7-20 (VVEY…HKLH), Gly-101, Asn-162, and Arg-187.

The protein belongs to the TmcAL family.

The protein localises to the cytoplasm. The enzyme catalyses cytidine(34) in elongator tRNA(Met) + acetate + ATP = N(4)-acetylcytidine(34) in elongator tRNA(Met) + AMP + diphosphate. In terms of biological role, catalyzes the formation of N(4)-acetylcytidine (ac(4)C) at the wobble position of elongator tRNA(Met), using acetate and ATP as substrates. First activates an acetate ion to form acetyladenylate (Ac-AMP) and then transfers the acetyl group to tRNA to form ac(4)C34. This chain is tRNA(Met) cytidine acetate ligase, found in Listeria monocytogenes serovar 1/2a (strain ATCC BAA-679 / EGD-e).